The following is a 38-amino-acid chain: Large ribosomal subunit protein bL12 (38 aa).

Belongs to the bacterial ribosomal protein bL12 family. As to quaternary structure, homodimer. Part of the ribosomal stalk of the 50S ribosomal subunit. Forms a multimeric L10(L12)X complex, where L10 forms an elongated spine to which 2 to 4 L12 dimers bind in a sequential fashion. Binds GTP-bound translation factors.

Functionally, forms part of the ribosomal stalk which helps the ribosome interact with GTP-bound translation factors. Is thus essential for accurate translation. The chain is Large ribosomal subunit protein bL12 (rplL) from Salinivibrio costicola (Vibrio costicola).